An 828-amino-acid chain; its full sequence is Periplasmic nitrate reductase (828 aa).

The tat-type signal signal peptide spans 1 to 31 (MKLSRRSFMKANAVAAAAAAAGLSVPGVARA). In terms of domain architecture, 4Fe-4S Mo/W bis-MGD-type spans 39–95 (IKWDKAPCRFCGTGCGVLVGTQQGRVVACQGDPDAPVNRGLNCIKGYFLPKIMYGKD). Residues Cys46, Cys49, Cys53, and Cys81 each contribute to the [4Fe-4S] cluster site. Residues Lys83, Gln150, Asn175, Cys179, 212–219 (WGANMAEM), 243–247 (STYQH), 262–264 (QSD), Met372, Gln376, Asn482, 508–509 (SD), Lys531, Asp558, and 718–727 (TGRVLEHWHT) contribute to the Mo-bis(molybdopterin guanine dinucleotide) site. Position 794 (Phe794) interacts with substrate. Positions 802 and 819 each coordinate Mo-bis(molybdopterin guanine dinucleotide).

Belongs to the prokaryotic molybdopterin-containing oxidoreductase family. NasA/NapA/NarB subfamily. Component of the periplasmic nitrate reductase NapAB complex composed of NapA and NapB. The cofactor is [4Fe-4S] cluster. It depends on Mo-bis(molybdopterin guanine dinucleotide) as a cofactor. Post-translationally, predicted to be exported by the Tat system. The position of the signal peptide cleavage has not been experimentally proven.

The protein localises to the periplasm. The catalysed reaction is 2 Fe(II)-[cytochrome] + nitrate + 2 H(+) = 2 Fe(III)-[cytochrome] + nitrite + H2O. Functionally, catalytic subunit of the periplasmic nitrate reductase complex NapAB. Receives electrons from NapB and catalyzes the reduction of nitrate to nitrite. The protein is Periplasmic nitrate reductase of Escherichia coli O8 (strain IAI1).